The sequence spans 85 residues: Large ribosomal subunit protein bL27 (85 aa).

The interval 1 to 22 is disordered; that stretch reads MAHKKAGGSTRNGRDSESKRLG.

The protein belongs to the bacterial ribosomal protein bL27 family.

The sequence is that of Large ribosomal subunit protein bL27 from Vibrio parahaemolyticus serotype O3:K6 (strain RIMD 2210633).